Reading from the N-terminus, the 211-residue chain is MLTIALSKGRILDDTLPLLAEAGIVPTENPDKSRKLIIPTTQADVRLLIVRATDVPTYVEHGAADLGVAGKDVLMEYTGQGLYEPLDLQIAKCRLMTAGAIGAVEPKGRLRVATKFVNVAKRYYAEQGRQVDIIKLYGSMELAPLIGLADKIIDVVDTGNTLRANGLEPQELIATISSRLVVNKASMKMQHARIQALIDTLRKAVESRHRS.

This sequence belongs to the ATP phosphoribosyltransferase family. Short subfamily. In terms of assembly, heteromultimer composed of HisG and HisZ subunits.

It is found in the cytoplasm. The catalysed reaction is 1-(5-phospho-beta-D-ribosyl)-ATP + diphosphate = 5-phospho-alpha-D-ribose 1-diphosphate + ATP. It participates in amino-acid biosynthesis; L-histidine biosynthesis; L-histidine from 5-phospho-alpha-D-ribose 1-diphosphate: step 1/9. Its function is as follows. Catalyzes the condensation of ATP and 5-phosphoribose 1-diphosphate to form N'-(5'-phosphoribosyl)-ATP (PR-ATP). Has a crucial role in the pathway because the rate of histidine biosynthesis seems to be controlled primarily by regulation of HisG enzymatic activity. The chain is ATP phosphoribosyltransferase from Pseudomonas syringae pv. syringae (strain B728a).